The following is a 329-amino-acid chain: Cathepsin K (329 aa).

The signal sequence occupies residues 1–15; the sequence is MWVFKFLLLPMVSFA. The propeptide at 16-114 is activation peptide; it reads LSPEEMLDTQ…TLYTPEWEGR (99 aa). Asn103 carries N-linked (GlcNAc...) asparagine glycosylation. 2 disulfides stabilise this stretch: Cys136–Cys177 and Cys170–Cys210. The active site involves Cys139. An N-linked (GlcNAc...) asparagine glycan is attached at Asn213. A disulfide bond links Cys269 and Cys318. Active-site residues include His276 and Asn296.

This sequence belongs to the peptidase C1 family. As to expression, predominantly expressed in bones. Expressed in thyroid epithelial cells.

It localises to the lysosome. The protein localises to the secreted. The protein resides in the apical cell membrane. The catalysed reaction is Broad proteolytic activity. With small-molecule substrates and inhibitors, the major determinant of specificity is P2, which is preferably Leu, Met &gt; Phe, and not Arg.. Its function is as follows. Thiol protease involved in osteoclastic bone resorption. Displays potent endoprotease activity against fibrinogen at acid pH. May play an important role in extracellular matrix degradation. Involved in the release of thyroid hormone thyroxine (T4) by limited proteolysis of TG/thyroglobulin in the thyroid follicle lumen. This chain is Cathepsin K (Ctsk), found in Mus musculus (Mouse).